Consider the following 425-residue polypeptide: Serine--tRNA ligase (425 aa).

233–235 (TAE) provides a ligand contact to L-serine. Position 264–266 (264–266 (RRE)) interacts with ATP. An L-serine-binding site is contributed by Glu287. 351–354 (EISS) is a binding site for ATP. Ser387 is an L-serine binding site.

Belongs to the class-II aminoacyl-tRNA synthetase family. Type-1 seryl-tRNA synthetase subfamily. As to quaternary structure, homodimer. The tRNA molecule binds across the dimer.

Its subcellular location is the cytoplasm. It catalyses the reaction tRNA(Ser) + L-serine + ATP = L-seryl-tRNA(Ser) + AMP + diphosphate + H(+). It carries out the reaction tRNA(Sec) + L-serine + ATP = L-seryl-tRNA(Sec) + AMP + diphosphate + H(+). Its pathway is aminoacyl-tRNA biosynthesis; selenocysteinyl-tRNA(Sec) biosynthesis; L-seryl-tRNA(Sec) from L-serine and tRNA(Sec): step 1/1. In terms of biological role, catalyzes the attachment of serine to tRNA(Ser). Is also able to aminoacylate tRNA(Sec) with serine, to form the misacylated tRNA L-seryl-tRNA(Sec), which will be further converted into selenocysteinyl-tRNA(Sec). The protein is Serine--tRNA ligase of Thermotoga maritima (strain ATCC 43589 / DSM 3109 / JCM 10099 / NBRC 100826 / MSB8).